The chain runs to 211 residues: Small ribosomal subunit protein uS4 (211 aa).

Residues 99–160 form the S4 RNA-binding domain; it reads RRLDSVVYQM…KSRNIQQVRE (62 aa).

Belongs to the universal ribosomal protein uS4 family. As to quaternary structure, part of the 30S ribosomal subunit. Contacts protein S5. The interaction surface between S4 and S5 is involved in control of translational fidelity.

One of the primary rRNA binding proteins, it binds directly to 16S rRNA where it nucleates assembly of the body of the 30S subunit. In terms of biological role, with S5 and S12 plays an important role in translational accuracy. The sequence is that of Small ribosomal subunit protein uS4 from Petrotoga mobilis (strain DSM 10674 / SJ95).